Consider the following 90-residue polypeptide: DNA-binding protein HU-beta (90 aa).

Belongs to the bacterial histone-like protein family. In terms of assembly, heterodimer of an alpha and a beta chain.

Functionally, histone-like DNA-binding protein which is capable of wrapping DNA to stabilize it, and thus to prevent its denaturation under extreme environmental conditions. The chain is DNA-binding protein HU-beta (hupB) from Salmonella typhi.